The sequence spans 29 residues: Inorganic pyrophosphatase (29 aa).

The protein resides in the periplasm. The catalysed reaction is diphosphate + H2O = 2 phosphate + H(+). Functionally, inorganic pyrophosphatase is an essential enzyme for the activation of sulfate by sulfate reducing bacteria. This is a high activity pyrophosphatase. The polypeptide is Inorganic pyrophosphatase (Nitratidesulfovibrio vulgaris (strain ATCC 29579 / DSM 644 / CCUG 34227 / NCIMB 8303 / VKM B-1760 / Hildenborough) (Desulfovibrio vulgaris)).